The sequence spans 90 residues: DNA-binding protein HU-1 (90 aa).

A Phosphothreonine modification is found at threonine 4.

It belongs to the bacterial histone-like protein family. In terms of assembly, homodimer.

In terms of biological role, histone-like DNA-binding protein which is capable of wrapping DNA to stabilize it, and thus to prevent its denaturation under extreme environmental conditions. The chain is DNA-binding protein HU-1 (hup2) from Halalkalibacterium halodurans (strain ATCC BAA-125 / DSM 18197 / FERM 7344 / JCM 9153 / C-125) (Bacillus halodurans).